The chain runs to 444 residues: Cortexillin-1 (444 aa).

Positions 1 to 227 (MAGKDWEIVQ…VLYTSLFFHA (227 aa)) are actin-binding. Calponin-homology (CH) domains lie at 8-115 (IVQE…RKYR) and 124-229 (KSSE…HAYR). 2 coiled-coil regions span residues 227–352 (AYRA…TRIR) and 410–434 (LATK…DLKA).

This sequence belongs to the cortexillin family. Homodimer; parallel.

The protein resides in the cytoplasm. It localises to the cytoskeleton. In terms of biological role, actin-bundling protein. When linked to F-actin the actin filaments form preferentially anti-parallel bundles that associate into meshworks. Plays a major role in cytokinesis. Negatively regulates cortical localization of rapgap1. The sequence is that of Cortexillin-1 (ctxA) from Dictyostelium discoideum (Social amoeba).